Here is a 241-residue protein sequence, read N- to C-terminus: 4-hydroxy-tetrahydrodipicolinate reductase (241 aa).

NAD(+) contacts are provided by residues 80–82 and 104–107; these read ATT and SANM. His-136 (proton donor/acceptor) is an active-site residue. His-137 contacts (S)-2,3,4,5-tetrahydrodipicolinate. Lys-140 functions as the Proton donor in the catalytic mechanism. A (S)-2,3,4,5-tetrahydrodipicolinate-binding site is contributed by 146–147; the sequence is GT.

Belongs to the DapB family.

The protein localises to the cytoplasm. It catalyses the reaction (S)-2,3,4,5-tetrahydrodipicolinate + NAD(+) + H2O = (2S,4S)-4-hydroxy-2,3,4,5-tetrahydrodipicolinate + NADH + H(+). The catalysed reaction is (S)-2,3,4,5-tetrahydrodipicolinate + NADP(+) + H2O = (2S,4S)-4-hydroxy-2,3,4,5-tetrahydrodipicolinate + NADPH + H(+). Its pathway is amino-acid biosynthesis; L-lysine biosynthesis via DAP pathway; (S)-tetrahydrodipicolinate from L-aspartate: step 4/4. Functionally, catalyzes the conversion of 4-hydroxy-tetrahydrodipicolinate (HTPA) to tetrahydrodipicolinate. In Staphylococcus haemolyticus (strain JCSC1435), this protein is 4-hydroxy-tetrahydrodipicolinate reductase.